A 130-amino-acid chain; its full sequence is Small ribosomal subunit protein uS8 (130 aa).

It belongs to the universal ribosomal protein uS8 family. In terms of assembly, part of the 30S ribosomal subunit.

Its function is as follows. One of the primary rRNA binding proteins, it binds directly to 16S rRNA central domain where it helps coordinate assembly of the platform of the 30S subunit. The sequence is that of Small ribosomal subunit protein uS8 from Methanoculleus marisnigri (strain ATCC 35101 / DSM 1498 / JR1).